A 123-amino-acid polypeptide reads, in one-letter code: MPTIQQLVRKGRKTKVSKNKTPALKGSPQRRGVCTRVYTTTPKKPNSALRKVARVRLSSQIEVTAYIPGVGHNLQEHSIVLVRGGRVKDLPGVRYRIVRGALDTQGVRNRKQARSRYGAKKEK.

Residues 1–32 (MPTIQQLVRKGRKTKVSKNKTPALKGSPQRRG) are disordered. A compositionally biased stretch (basic residues) spans 9–18 (RKGRKTKVSK). Asp-89 bears the 3-methylthioaspartic acid mark.

Belongs to the universal ribosomal protein uS12 family. As to quaternary structure, part of the 30S ribosomal subunit. Contacts proteins S8 and S17. May interact with IF1 in the 30S initiation complex.

In terms of biological role, with S4 and S5 plays an important role in translational accuracy. Interacts with and stabilizes bases of the 16S rRNA that are involved in tRNA selection in the A site and with the mRNA backbone. Located at the interface of the 30S and 50S subunits, it traverses the body of the 30S subunit contacting proteins on the other side and probably holding the rRNA structure together. The combined cluster of proteins S8, S12 and S17 appears to hold together the shoulder and platform of the 30S subunit. The sequence is that of Small ribosomal subunit protein uS12 from Thermobifida fusca (strain YX).